The chain runs to 59 residues: Cortexin domain-containing 1 protein (59 aa).

A helical membrane pass occupies residues 17-37; it reads LTLACFVFLCLFLVVMIIRCA.

The protein localises to the membrane. In Homo sapiens (Human), this protein is Cortexin domain-containing 1 protein.